The primary structure comprises 1379 residues: DNA-directed RNA polymerase subunit beta'' (1379 aa).

Zn(2+) contacts are provided by Cys-224, Cys-295, Cys-302, and Cys-305. Residues 503–524 (SVQSLSVKRRSTSKLSETNDEA) are disordered.

The protein belongs to the RNA polymerase beta' chain family. RpoC2 subfamily. In plastids the minimal PEP RNA polymerase catalytic core is composed of four subunits: alpha, beta, beta', and beta''. When a (nuclear-encoded) sigma factor is associated with the core the holoenzyme is formed, which can initiate transcription. Requires Zn(2+) as cofactor.

It is found in the plastid. It catalyses the reaction RNA(n) + a ribonucleoside 5'-triphosphate = RNA(n+1) + diphosphate. Its function is as follows. DNA-dependent RNA polymerase catalyzes the transcription of DNA into RNA using the four ribonucleoside triphosphates as substrates. The sequence is that of DNA-directed RNA polymerase subunit beta'' from Cuscuta exaltata (Tall dodder).